The sequence spans 209 residues: Large ribosomal subunit protein uL4 (209 aa).

Residues 45-77 (RQGTHKAKERAEVTGSTRKIKKQKGTGTARAGS) are disordered.

This sequence belongs to the universal ribosomal protein uL4 family. As to quaternary structure, part of the 50S ribosomal subunit.

In terms of biological role, one of the primary rRNA binding proteins, this protein initially binds near the 5'-end of the 23S rRNA. It is important during the early stages of 50S assembly. It makes multiple contacts with different domains of the 23S rRNA in the assembled 50S subunit and ribosome. Functionally, forms part of the polypeptide exit tunnel. The protein is Large ribosomal subunit protein uL4 of Flavobacterium johnsoniae (strain ATCC 17061 / DSM 2064 / JCM 8514 / BCRC 14874 / CCUG 350202 / NBRC 14942 / NCIMB 11054 / UW101) (Cytophaga johnsonae).